The chain runs to 108 residues: UPF0166 protein MJ1524 (108 aa).

The protein belongs to the UPF0166 family.

The chain is UPF0166 protein MJ1524 from Methanocaldococcus jannaschii (strain ATCC 43067 / DSM 2661 / JAL-1 / JCM 10045 / NBRC 100440) (Methanococcus jannaschii).